Reading from the N-terminus, the 563-residue chain is Arginine--tRNA ligase (563 aa).

Positions 121–131 match the 'HIGH' region motif; sequence PNIAKPFSIGH.

Belongs to the class-I aminoacyl-tRNA synthetase family. As to quaternary structure, monomer.

Its subcellular location is the cytoplasm. The enzyme catalyses tRNA(Arg) + L-arginine + ATP = L-arginyl-tRNA(Arg) + AMP + diphosphate. This is Arginine--tRNA ligase from Streptococcus pyogenes serotype M3 (strain ATCC BAA-595 / MGAS315).